Reading from the N-terminus, the 170-residue chain is CASP-like protein 1F1 (170 aa).

At 1–16 (MMGDNEGRRTPLLNLG) the chain is on the cytoplasmic side. Residues 17–37 (VQVSMRVLTIGAAMASMWVMI) form a helical membrane-spanning segment. The Extracellular portion of the chain corresponds to 38–62 (TNREVASVYGIAFEAKYSYSSAFRY). Residues 63 to 83 (LVYAQIAVCAATLFTLVWACL) form a helical membrane-spanning segment. Over 84–88 (AVRRR) the chain is Cytoplasmic. Residues 89–109 (GLVFALFFFDLLTTLTAISAF) form a helical membrane-spanning segment. At 110–141 (SAAFAEGYVGKYGNKQAGWLPICGYVHGYCSR) the chain is on the extracellular side. A helical transmembrane segment spans residues 142 to 162 (VTISLAMSFASFILLFILTVL). Residues 163–170 (TASAARHY) lie on the Cytoplasmic side of the membrane.

This sequence belongs to the Casparian strip membrane proteins (CASP) family. Homodimer and heterodimers. In flowers, expressed in the anther wall.

Its subcellular location is the cell membrane. The sequence is that of CASP-like protein 1F1 from Arabidopsis thaliana (Mouse-ear cress).